Consider the following 860-residue polypeptide: Leucine--tRNA ligase (860 aa).

The 'HIGH' region motif lies at 42–52 (PYPSGRLHMGH). The 'KMSKS' region motif lies at 619 to 623 (KMSKS). Lys622 contributes to the ATP binding site.

The protein belongs to the class-I aminoacyl-tRNA synthetase family.

Its subcellular location is the cytoplasm. It catalyses the reaction tRNA(Leu) + L-leucine + ATP = L-leucyl-tRNA(Leu) + AMP + diphosphate. The protein is Leucine--tRNA ligase of Klebsiella pneumoniae subsp. pneumoniae (strain ATCC 700721 / MGH 78578).